A 183-amino-acid chain; its full sequence is Peptidyl-tRNA hydrolase (183 aa).

Tyrosine 14 contacts tRNA. Histidine 19 (proton acceptor) is an active-site residue. TRNA is bound by residues tyrosine 61, asparagine 63, and asparagine 109.

It belongs to the PTH family. In terms of assembly, monomer.

Its subcellular location is the cytoplasm. It catalyses the reaction an N-acyl-L-alpha-aminoacyl-tRNA + H2O = an N-acyl-L-amino acid + a tRNA + H(+). Its function is as follows. Hydrolyzes ribosome-free peptidyl-tRNAs (with 1 or more amino acids incorporated), which drop off the ribosome during protein synthesis, or as a result of ribosome stalling. Catalyzes the release of premature peptidyl moieties from peptidyl-tRNA molecules trapped in stalled 50S ribosomal subunits, and thus maintains levels of free tRNAs and 50S ribosomes. This is Peptidyl-tRNA hydrolase from Aliarcobacter butzleri (strain RM4018) (Arcobacter butzleri).